The sequence spans 358 residues: Probable D-xylulose reductase A (358 aa).

Zn(2+)-binding residues include cysteine 47, histidine 72, and glutamate 73. Glycine 182–glycine 187 is a binding site for NAD(+).

It belongs to the zinc-containing alcohol dehydrogenase family. It depends on Zn(2+) as a cofactor.

It carries out the reaction xylitol + NAD(+) = D-xylulose + NADH + H(+). Its pathway is carbohydrate degradation; L-arabinose degradation via L-arabinitol; D-xylulose 5-phosphate from L-arabinose (fungal route): step 4/5. In terms of biological role, xylitol dehydrogenase which catalyzes the conversion of xylitol to D-xylulose. Xylose is a major component of hemicelluloses such as xylan. Most fungi utilize D-xylose via three enzymatic reactions, xylose reductase (XR), xylitol dehydrogenase (XDH), and xylulokinase, to form xylulose 5-phosphate, which enters pentose phosphate pathway. This is Probable D-xylulose reductase A (xdhA) from Aspergillus niger (strain ATCC MYA-4892 / CBS 513.88 / FGSC A1513).